The primary structure comprises 972 residues: Nuclear factor NF-kappa-B p105 subunit (972 aa).

The 208-residue stretch at 39–246 (ADGPYLQILE…DAIYDSKAPN (208 aa)) folds into the RHD domain. An S-nitrosocysteine; alternate modification is found at C61. Residue C61 is the site of S-(15-deoxy-Delta12,14-prostaglandin J2-9-yl)cysteine; alternate attachment. K325 is covalently cross-linked (Glycyl lysine isopeptide (Lys-Gly) (interchain with G-Cter in SUMO2)). The residue at position 337 (S337) is a Phosphoserine; by PKA. The short motif at 360–365 (QRKRQK) is the Nuclear localization signal element. Positions 372 to 394 (DSFGGGSGAGAGGGGMFGSGGGG) are GRR. The segment at 425–473 (KSNAGMKHGTIDTPSKNDSEGCGKNVDREAVNLSGKVTEPTEQDKESSM) is disordered. 2 positions are modified to N6-acetyllysine; by EP300: K431 and K440. An interaction with CFLAR region spans residues 435 to 972 (IDTPSKNDSE…GQEGPIEGKI (538 aa)). Residues 439 to 454 (SKNDSEGCGKNVDREA) are compositionally biased toward basic and acidic residues. ANK repeat units follow at residues 539–568 (NGDSVLHLAIIHLHAQLVRDLLEVTSGLIS), 578–607 (LYQTPLHLAVITKQEAVVDDLLRAGADLSL), 611–640 (LGNSVLHLAAKEGQDKILSILLKHKKAALL), 647–676 (EGLNAIHIAVMSNSMPCLLLLVAAGADVNA), 681–711 (SGRTALHLAVEHDNISLAGCLLLEGDAHVDS), and 715–744 (DGTTPLHIAAGRGSTRLAALLKAAGADPLV). Positions 647 to 681 (EGLNAIHIAVMSNSMPCLLLLVAAGADVNAQERKS) are essential for interaction with HIF1AN. Residue N675 is modified to (3S)-3-hydroxyasparagine; by HIF1AN. Position 756 is a phosphoserine (S756). One copy of the ANK 7 repeat lies at 768–798 (PGTTPLDMATNWQVFDILNGKPYEPEFTSDD). The 76-residue stretch at 814–889 (LQLYKLLEIP…EAIEVIQAAF (76 aa)) folds into the Death domain. Residues 894-926 (TAAPSPGKGAPQTLSLPLSSASTRSPVDEVRDD) are disordered. A compositionally biased stretch (polar residues) spans 905 to 918 (QTLSLPLSSASTRS). Residues S908 and S912 each carry the phosphoserine; by GSK3-beta; in vitro modification. S927 carries the post-translational modification Phosphoserine. 2 positions are modified to phosphoserine; by IKKB: S931 and S936. A Phosphoserine modification is found at S941. At T947 the chain carries Phosphothreonine.

Component of the NF-kappa-B p65-p50 complex. Homodimer; component of the NF-kappa-B p50-p50 complex. Component of the NF-kappa-B p105-p50 complex. Component of the NF-kappa-B p50-c-Rel complex. Component of a complex consisting of the NF-kappa-B p50-p50 homodimer and BCL3. Also interacts with MAP3K8. NF-kappa-B p50 subunit interacts with NCOA3 coactivator, which may coactivate NF-kappa-B dependent expression via its histone acetyltransferase activity. Interacts with TSC22D3; this interaction prevents nuclear translocation and DNA-binding. Interacts with SPAG9 and UNC5CL. NFKB1/p105 interacts with CFLAR; the interaction inhibits p105 processing into p50. NFKB1/p105 forms a ternary complex with MAP3K8 and TNIP2. Interacts with GSK3B; the interaction prevents processing of p105 to p50. NFKB1/p50 interacts with NFKBIE. NFKB1/p50 interacts with NFKBIZ. Nuclear factor NF-kappa-B p50 subunit interacts with NFKBID. Directly interacts with MEN1. Interacts with HIF1AN. Interacts with FEM1A; interaction is direct. Post-translationally, generation of the NF-kappa-B p50 (Nuclear factor NF-kappa-B p50 subunit) transcription factor takes place both cotranslationally and post-translationally via non-mutually exclusive mechanisms. A cotranslational processing allows the production of both p50 and p105 (Nuclear factor NF-kappa-B p105 subunit) from a single NFKB1 mRNA. While translation occurs, the particular unfolded structure after the GRR repeat region acts as a substrate for the proteasome, promoting degradation of the C-terminus. The GRR acts as a proteasomal 'stop signal', protecting the region upstream of the GRR from degradation and promoting generation of p50. It is unclear if limited proteasome degradation during cotranslational processing depends on ubiquitination. NF-kappa-B p50 is also generated post-translationally following ubiquitination by the KPC complex, leading to limited processing by the proteasome downstream of the GRR region, thereby generating p50. Phosphorylation at the C-terminus by IKBKB/IKKB acts as a signal for ubiquitination and promotes either complete degradation or processing to generate the NF-kappa-B p50 (Nuclear factor NF-kappa-B p50 subunit). Phosphorylation at Ser-908 and Ser-912 primes p105 for proteolytic processing in response to TNF-alpha stimulation. Phosphorylation at Ser-927, Ser-931 and Ser-936 are required for BTRC/BTRCP-mediated ubiquitination and proteolysis. Phosphorylation at Ser-931 is also required for ubiquitination by the KPC complex and limited processing to generate NF-kappa-B p50 (Nuclear factor NF-kappa-B p50 subunit). In terms of processing, polyubiquitinated at multiple Lys residues in the C-terminus. Polyubiquitinated by the SCF(FBXW11) and SCF(BTRC) complexes following phosphorylation at Ser-923, Ser-927, Ser-931 and Ser-936, leading to its complete degradation. In contrast, polyubiquitination by the KPC complex following phosphorylation at Ser-931 leads to limited proteosomal processing and generation of the active NF-kappa-B p50 (Nuclear factor NF-kappa-B p50 subunit). Post-translationally, S-nitrosylation of Cys-61 affects DNA binding. The covalent modification of cysteine by 15-deoxy-Delta12,14-prostaglandin-J2 is autocatalytic and reversible. It may occur as an alternative to other cysteine modifications, such as S-nitrosylation and S-palmitoylation.

The protein localises to the cytoplasm. It localises to the nucleus. In terms of biological role, NF-kappa-B is a pleiotropic transcription factor present in almost all cell types and is the endpoint of a series of signal transduction events that are initiated by a vast array of stimuli related to many biological processes such as inflammation, immunity, differentiation, cell growth, tumorigenesis and apoptosis. NF-kappa-B is a homo- or heterodimeric complex formed by the Rel-like domain-containing proteins RELA/p65, RELB, NFKB1/p105, NFKB1/p50, REL and NFKB2/p52 and the heterodimeric p65-p50 complex appears to be most abundant one. The dimers bind at kappa-B sites in the DNA of their target genes and the individual dimers have distinct preferences for different kappa-B sites that they can bind with distinguishable affinity and specificity. Different dimer combinations act as transcriptional activators or repressors, respectively. NF-kappa-B is controlled by various mechanisms of post-translational modification and subcellular compartmentalization as well as by interactions with other cofactors or corepressors. NF-kappa-B complexes are held in the cytoplasm in an inactive state complexed with members of the NF-kappa-B inhibitor (I-kappa-B) family. In a conventional activation pathway, I-kappa-B is phosphorylated by I-kappa-B kinases (IKKs) in response to different activators, subsequently degraded thus liberating the active NF-kappa-B complex which translocates to the nucleus. NF-kappa-B heterodimeric p65-p50 and RelB-p50 complexes are transcriptional activators. The NF-kappa-B p50-p50 homodimer is a transcriptional repressor, but can act as a transcriptional activator when associated with BCL3. NFKB1 appears to have dual functions such as cytoplasmic retention of attached NF-kappa-B proteins by p105 and generation of p50 by a cotranslational processing. The proteasome-mediated process ensures the production of both p50 and p105 and preserves their independent function, although processing of NFKB1/p105 also appears to occur post-translationally. p50 binds to the kappa-B consensus sequence 5'-GGRNNYYCC-3', located in the enhancer region of genes involved in immune response and acute phase reactions. In a complex with MAP3K8, NFKB1/p105 represses MAP3K8-induced MAPK signaling; active MAP3K8 is released by proteasome-dependent degradation of NFKB1/p105. P105 is the precursor of the active p50 subunit (Nuclear factor NF-kappa-B p50 subunit) of the nuclear factor NF-kappa-B. Acts as a cytoplasmic retention of attached NF-kappa-B proteins by p105. Its function is as follows. Constitutes the active form, which associates with RELA/p65 to form the NF-kappa-B p65-p50 complex to form a transcription factor. Together with RELA/p65, binds to the kappa-B consensus sequence 5'-GGRNNYYCC-3', located in the enhancer region of genes involved in immune response and acute phase reactions. The protein is Nuclear factor NF-kappa-B p105 subunit (NFKB1) of Canis lupus familiaris (Dog).